Reading from the N-terminus, the 196-residue chain is Imidazoleglycerol-phosphate dehydratase (196 aa).

The protein belongs to the imidazoleglycerol-phosphate dehydratase family.

It localises to the cytoplasm. The enzyme catalyses D-erythro-1-(imidazol-4-yl)glycerol 3-phosphate = 3-(imidazol-4-yl)-2-oxopropyl phosphate + H2O. It participates in amino-acid biosynthesis; L-histidine biosynthesis; L-histidine from 5-phospho-alpha-D-ribose 1-diphosphate: step 6/9. The sequence is that of Imidazoleglycerol-phosphate dehydratase from Akkermansia muciniphila (strain ATCC BAA-835 / DSM 22959 / JCM 33894 / BCRC 81048 / CCUG 64013 / CIP 107961 / Muc).